The following is a 378-amino-acid chain: O-methyltransferase dpfgI (378 aa).

Residues 232–233, aspartate 257, 279–280, and arginine 295 each bind S-adenosyl-L-methionine; these read GG and NF. Residue histidine 299 is the Proton acceptor of the active site.

It belongs to the class I-like SAM-binding methyltransferase superfamily. Cation-independent O-methyltransferase family.

It participates in secondary metabolite biosynthesis; terpenoid biosynthesis. In terms of biological role, O-methyltransferase; part of the gene cluster that mediates the biosynthesis of diterpenoid pyrones. The first step of the pathway is the synthesis of the alpha-pyrone moiety by the polyketide synthase dpfgA via condensation of one acetyl-CoA starter unit with 3 malonyl-CoA units and 2 methylations. The alpha-pyrone is then combined with geranylgeranyl pyrophosphate (GGPP) formed by the GGPP synthase dpfgD through the action of the prenyltransferase dpfgC to yield a linear alpha-pyrone diterpenoid. Subsequent steps in the diterpenoid pyrone biosynthetic pathway involve the decalin core formation, which is initiated by the epoxidation of the C10-C11 olefin by the FAD-dependent oxidoreductase dpfgE, and is followed by a cyclization cascade catalyzed by the terpene cyclase dpfgB. The short chain dehydrogenase/reductase dpfgG then oxidizes the 8S hydroxy group to a ketone and the short chain dehydrogenase/reductase dpfgH reduces the ketone to the 8R hydroxy group to yield higginsianin B. Higginsianin B is further methylated by the methyltransferase dpfgI to produce the intermediate named FDDP B. The cytochrome P450 monooxygenase dfgpJ then catalyzes a three-step oxidation at C-27 to generate a carboxylic acid as well as C-26 hydroxylation. Finally, methyltransferase dpfgK methylates the carboxylic acid generated by dpfgJ, yielding the final diterpenoid pyrones from the pathway which were named FDDP D and FDDP E. The protein is O-methyltransferase dpfgI of Gibberella zeae (strain ATCC MYA-4620 / CBS 123657 / FGSC 9075 / NRRL 31084 / PH-1) (Wheat head blight fungus).